Consider the following 877-residue polypeptide: Alanine--tRNA ligase (877 aa).

Residues His563, His567, Cys667, and His671 each contribute to the Zn(2+) site.

This sequence belongs to the class-II aminoacyl-tRNA synthetase family. Zn(2+) serves as cofactor.

The protein resides in the cytoplasm. The catalysed reaction is tRNA(Ala) + L-alanine + ATP = L-alanyl-tRNA(Ala) + AMP + diphosphate. In terms of biological role, catalyzes the attachment of alanine to tRNA(Ala) in a two-step reaction: alanine is first activated by ATP to form Ala-AMP and then transferred to the acceptor end of tRNA(Ala). Also edits incorrectly charged Ser-tRNA(Ala) and Gly-tRNA(Ala) via its editing domain. The protein is Alanine--tRNA ligase of Cytophaga hutchinsonii (strain ATCC 33406 / DSM 1761 / CIP 103989 / NBRC 15051 / NCIMB 9469 / D465).